The following is a 182-amino-acid chain: Peptidyl-prolyl cis-trans isomerase H (182 aa).

Residues Phe15–Glu181 form the PPIase cyclophilin-type domain.

This sequence belongs to the cyclophilin-type PPIase family. PPIase H subfamily.

The protein localises to the nucleus. It catalyses the reaction [protein]-peptidylproline (omega=180) = [protein]-peptidylproline (omega=0). Its function is as follows. PPIases accelerate the folding of proteins. It catalyzes the cis-trans isomerization of proline imidic peptide bonds in oligopeptides. The protein is Peptidyl-prolyl cis-trans isomerase H (CYP3) of Gibberella zeae (strain ATCC MYA-4620 / CBS 123657 / FGSC 9075 / NRRL 31084 / PH-1) (Wheat head blight fungus).